A 125-amino-acid chain; its full sequence is Somatostatin-2 (125 aa).

The signal sequence occupies residues 1-24 (MQCIRCPAILALLALVLCGPSVSS). A Pyrrolidone carboxylic acid modification is found at glutamine 25. Residues 25–97 (QLDREQSDNQ…ATGGRMNLER (73 aa)) constitute a propeptide that is removed on maturation. A disordered region spans residues 82–107 (AEDASMATGGRMNLERSVDSTNNLPP). Cysteine 114 and cysteine 125 are disulfide-bonded. Residue lysine 120 is modified to 5-hydroxylysine.

This sequence belongs to the somatostatin family.

The protein resides in the secreted. Somatostatin inhibits the release of somatotropin. The polypeptide is Somatostatin-2 (sst2) (Lophius americanus (American angler)).